Here is a 1442-residue protein sequence, read N- to C-terminus: MTVFRQENVDDYYDTGEELGSGQFAVVKKCREKSTGLQYAAKFIKKRRTKSSRRGVSREDIEREVSILKEIRHPNVITLHEVYENKTDVILILELVAGGELFDFLAEKESLTEEEATEFLKQILSGVYYLHSLQIAHFDLKPENIMLLDRNVPKPRIKIIDFGLAHKIDFGNEFKNIFGTPEFVAPEIVNYEPLGLEADMWSIGVITYILLSGASPFLGDTKQETLANVSAVNYDFEEEFFRNTSTLAKDFIRRLLVKDPKKRMTIQDSLQHPWIKPKDTQQALSRKASAVNMEKFKKFAARKKWKQSVRLISLCQRLSRSFLSRSNMSVARSDDTLDEEDSFVMKAIIHAINDDNVPGLQHLLGSLSSYDVNQPNKHGTPPLLIAAGCGNIQMLQLLIKRGSRIDVQDKGGSNAIYWASRHGHVDTLKFLNENKCPLDVKDKSGETALHVAARYGHADVVQLLCSFGSNPDFQDKEEETPLHCAAWHGYYSVAKALCEVGCNVNIKNREGETPLLTASARGYHDIVECLAEHGADLNASDKDGHIALHLAVRRCQMEVIKTLLGHGSFVDFQDRHGNTPLHVACKDGSAPIVVALCEASCNLDISNKYGRTPLHLAANNGILDVVRYLCLMGANVEALTSDGKTAEDLAKAEQHEHVAGLLARLRKDTHRGLFIQQLRPTQNLQPRIKLKLFGHSGSGKSTLVESLKCGLLRSFFRRRRPRLSSTNSTRFPPSPLAAKPTVSVSINNLYPGCENVSVRSRSMMFEPGLTKGMLEVFVAPSHHLHCSTDDQSTKAIDIQNAYLNGVGDFSVWEFSGNPVYFCCYDYFAANDPTSIHIIVFSLEEPYEIQLNQVIFWLSFLKSLVPVEEPIAFGGKLKNPLRVVLVATHADIMNIPRPAGGEFGYDKDTSLLKEIRNRFGNDLHVSNKLFVLDAGASGSKDIKVLRNHLQEIRSQIVSGCSPMTHLCEKIISTLPSWRKLNGPNQLMSLQQFVYDVQDQLNPLASEDDLRRIAQQLHSTGEINIMQSETVQDVLLLDPRWLCTNVLGKLLSVETPRALHHYRGRYTMEDIQRLVPDSDVEELLQILDAMDICARDLSSGTMVDIPALIKTDSLQRSWADEEDEVMVYGGVRIVPVEHLTPFPCGIFHKVQVNLCRWIHQQSAEGDADIRLWVSGCRIANRGAELLVLLVNHGQGIEVQVRGLETEKIKCCLLLDSVCSTIETVMATTLPGLLTVKHYLSPQQLREHHEPVMVYQPRDFFRAQTLKESSLTNTMGGYKESFSSITCFGCHDVYSQASLGMDIHASDLSLLTRRKLSRLLDPPDPMGKDWCLLAMNLGLPDMVAKHNVNNRASRDFLPSPVHALLQEWTSYPESTVGILISKLRELGRRDAADFLLKASSVFKINLDGNGQEAYASSCNSGTSYNSISSVVSRRDSHAWTPLYDL.

One can recognise a Protein kinase domain in the interval 13–275 (YDTGEELGSG…IQDSLQHPWI (263 aa)). Residues 19–27 (LGSGQFAVV) and lysine 42 each bind ATP. Catalysis depends on aspartate 139, which acts as the Proton acceptor. The calmodulin-binding stretch occupies residues 267 to 334 (QDSLQHPWIK…RSNMSVARSD (68 aa)). A Phosphoserine; by RPS6KA1 and RPS6KA3 modification is found at serine 289. The autoinhibitory domain stretch occupies residues 292-301 (NMEKFKKFAA). At serine 308 the chain carries Phosphoserine; by autocatalysis. Phosphoserine is present on residues serine 319 and serine 333. ANK repeat units lie at residues 378–407 (HGTP…RIDV), 411–440 (GGSN…PLDV), 444–473 (SGET…NPDF), 477–506 (EEET…NVNI), 510–539 (EGET…DLNA), 543–572 (DGHI…FVDF), 576–605 (HGNT…NLDI), and 609–638 (YGRT…NVEA). One can recognise a Roc domain in the interval 681–955 (TQNLQPRIKL…NHLQEIRSQI (275 aa)). Serine 734 is modified (phosphoserine; by MAPK1). One copy of the ANK 9 repeat lies at 875-904 (KLKNPLRVVLVATHADIMNIPRPAGGEFGY). At serine 1115 the chain carries Phosphoserine. The stretch at 1164–1196 (DADIRLWVSGCRIANRGAELLVLLVNHGQGIEV) is one ANK 10 repeat. The 85-residue stretch at 1312-1396 (KLSRLLDPPD…DAADFLLKAS (85 aa)) folds into the Death domain. Serine 1433 carries the phosphoserine modification.

It belongs to the protein kinase superfamily. CAMK Ser/Thr protein kinase family. DAP kinase subfamily. As to quaternary structure, interacts with KLHL20. Interacts (via death domain) with MAPK1 and MAPK3. Interacts with MAP1B (via N-terminus). Interacts with PRKD1 in an oxidative stress-regulated manner. Interacts with PIN1, PDCD6, BECN1, TSC2 and STX1A. Interacts (via kinase domain) with DAPK3 (via kinase domain). Interacts with GRINB. Interacts (via death domain) with UNC5B (via death domain). Interacts with UNC5C (via death domain). Mg(2+) serves as cofactor. Ubiquitinated by the BCR(KLHL20) E3 ubiquitin ligase complex, leading to its degradation by the proteasome. Post-translationally, in response to mitogenic stimulation (PMA or EGF), phosphorylated at Ser-289; phosphorylation suppresses DAPK1 pro-apoptotic function. Autophosphorylation at Ser-308 inhibits its catalytic activity. Phosphorylation at Ser-734 by MAPK1 increases its catalytic activity and promotes cytoplasmic retention of MAPK1. Endoplasmic-stress can cause dephosphorylation at Ser-308. As to expression, high levels in bladder, uterus, vas deferens, lung, liver and kidney.

It catalyses the reaction L-seryl-[protein] + ATP = O-phospho-L-seryl-[protein] + ADP + H(+). The enzyme catalyses L-threonyl-[protein] + ATP = O-phospho-L-threonyl-[protein] + ADP + H(+). Its activity is regulated as follows. Activated by Ca(2+)/calmodulin. Regulated by a locking mechanism, involving autophosphorylation at Ser-308 and calmodulin binding. In the inactive state, Ser-308 is phosphorylated. Activation involves its dephosphorylation and a release-of-autoinhibition mechanism where binding of calmodulin induces a conformational change that relieves the steric block of the active site by the autoinhibitory domain. Activity is modulated by UNC5B and NTN1. UNC5B activates it by inhibiting the phosphorylation at Ser-308, whereas NTN1 inhibits UNC5B-mediated activation of DAPK1. Endoplasmic-stress activates by causing Ser-308 dephosphorylation. Its function is as follows. Calcium/calmodulin-dependent serine/threonine kinase involved in multiple cellular signaling pathways that trigger cell survival, apoptosis, and autophagy. Regulates both type I apoptotic and type II autophagic cell deaths signal, depending on the cellular setting. The former is caspase-dependent, while the latter is caspase-independent and is characterized by the accumulation of autophagic vesicles. Phosphorylates PIN1 resulting in inhibition of its catalytic activity, nuclear localization, and cellular function. Phosphorylates TPM1, enhancing stress fiber formation in endothelial cells. Phosphorylates STX1A and significantly decreases its binding to STXBP1. Phosphorylates PRKD1 and regulates JNK signaling by binding and activating PRKD1 under oxidative stress. Phosphorylates BECN1, reducing its interaction with BCL2 and BCL2L1 and promoting the induction of autophagy. Phosphorylates TSC2, disrupting the TSC1-TSC2 complex and stimulating mTORC1 activity in a growth factor-dependent pathway. Phosphorylates RPS6, MYL9 and DAPK3. Acts as a signaling amplifier of NMDA receptors at extrasynaptic sites for mediating brain damage in stroke. Cerebral ischemia recruits DAPK1 into the NMDA receptor complex and it phosphorylates GRINB at Ser-1303 inducing injurious Ca(2+) influx through NMDA receptor channels, resulting in an irreversible neuronal death. Required together with DAPK3 for phosphorylation of RPL13A upon interferon-gamma activation which is causing RPL13A involvement in transcript-selective translation inhibition. This chain is Death-associated protein kinase 1 (Dapk1), found in Mus musculus (Mouse).